Consider the following 440-residue polypeptide: Thymidine phosphorylase (440 aa).

Belongs to the thymidine/pyrimidine-nucleoside phosphorylase family. Homodimer.

The catalysed reaction is thymidine + phosphate = 2-deoxy-alpha-D-ribose 1-phosphate + thymine. The protein operates within pyrimidine metabolism; dTMP biosynthesis via salvage pathway; dTMP from thymine: step 1/2. In terms of biological role, the enzymes which catalyze the reversible phosphorolysis of pyrimidine nucleosides are involved in the degradation of these compounds and in their utilization as carbon and energy sources, or in the rescue of pyrimidine bases for nucleotide synthesis. The chain is Thymidine phosphorylase from Yersinia pseudotuberculosis serotype O:1b (strain IP 31758).